A 449-amino-acid polypeptide reads, in one-letter code: Serine--tRNA ligase (449 aa).

256 to 258 (TSE) lines the L-serine pocket. Residue 287-289 (RAE) coordinates ATP. Glu310 contacts L-serine. Position 374–377 (374–377 (EISS)) interacts with ATP. L-serine is bound at residue Ser410.

The protein belongs to the class-II aminoacyl-tRNA synthetase family. Type-1 seryl-tRNA synthetase subfamily. As to quaternary structure, homodimer. The tRNA molecule binds across the dimer.

It is found in the cytoplasm. It carries out the reaction tRNA(Ser) + L-serine + ATP = L-seryl-tRNA(Ser) + AMP + diphosphate + H(+). The enzyme catalyses tRNA(Sec) + L-serine + ATP = L-seryl-tRNA(Sec) + AMP + diphosphate + H(+). The protein operates within aminoacyl-tRNA biosynthesis; selenocysteinyl-tRNA(Sec) biosynthesis; L-seryl-tRNA(Sec) from L-serine and tRNA(Sec): step 1/1. Catalyzes the attachment of serine to tRNA(Ser). Is also able to aminoacylate tRNA(Sec) with serine, to form the misacylated tRNA L-seryl-tRNA(Sec), which will be further converted into selenocysteinyl-tRNA(Sec). The sequence is that of Serine--tRNA ligase from Xanthomonas oryzae pv. oryzae (strain MAFF 311018).